Here is a 205-residue protein sequence, read N- to C-terminus: Thiamine-phosphate synthase (205 aa).

Residues 35–39 (QYRDK) and Asn-67 each bind 4-amino-2-methyl-5-(diphosphooxymethyl)pyrimidine. Positions 68 and 86 each coordinate Mg(2+). A 4-amino-2-methyl-5-(diphosphooxymethyl)pyrimidine-binding site is contributed by Thr-105. 132–134 (SLT) is a 2-[(2R,5Z)-2-carboxy-4-methylthiazol-5(2H)-ylidene]ethyl phosphate binding site. Lys-135 provides a ligand contact to 4-amino-2-methyl-5-(diphosphooxymethyl)pyrimidine. Residue Gly-162 coordinates 2-[(2R,5Z)-2-carboxy-4-methylthiazol-5(2H)-ylidene]ethyl phosphate.

The protein belongs to the thiamine-phosphate synthase family. Mg(2+) serves as cofactor.

The catalysed reaction is 2-[(2R,5Z)-2-carboxy-4-methylthiazol-5(2H)-ylidene]ethyl phosphate + 4-amino-2-methyl-5-(diphosphooxymethyl)pyrimidine + 2 H(+) = thiamine phosphate + CO2 + diphosphate. The enzyme catalyses 2-(2-carboxy-4-methylthiazol-5-yl)ethyl phosphate + 4-amino-2-methyl-5-(diphosphooxymethyl)pyrimidine + 2 H(+) = thiamine phosphate + CO2 + diphosphate. It catalyses the reaction 4-methyl-5-(2-phosphooxyethyl)-thiazole + 4-amino-2-methyl-5-(diphosphooxymethyl)pyrimidine + H(+) = thiamine phosphate + diphosphate. The protein operates within cofactor biosynthesis; thiamine diphosphate biosynthesis; thiamine phosphate from 4-amino-2-methyl-5-diphosphomethylpyrimidine and 4-methyl-5-(2-phosphoethyl)-thiazole: step 1/1. Functionally, condenses 4-methyl-5-(beta-hydroxyethyl)thiazole monophosphate (THZ-P) and 2-methyl-4-amino-5-hydroxymethyl pyrimidine pyrophosphate (HMP-PP) to form thiamine monophosphate (TMP). The protein is Thiamine-phosphate synthase of Pseudomonas savastanoi pv. phaseolicola (strain 1448A / Race 6) (Pseudomonas syringae pv. phaseolicola (strain 1448A / Race 6)).